We begin with the raw amino-acid sequence, 222 residues long: Deoxyribose-phosphate aldolase (222 aa).

Aspartate 90 serves as the catalytic Proton donor/acceptor. The Schiff-base intermediate with acetaldehyde role is filled by lysine 152. Lysine 181 (proton donor/acceptor) is an active-site residue.

Belongs to the DeoC/FbaB aldolase family. DeoC type 1 subfamily.

It localises to the cytoplasm. The catalysed reaction is 2-deoxy-D-ribose 5-phosphate = D-glyceraldehyde 3-phosphate + acetaldehyde. Its pathway is carbohydrate degradation; 2-deoxy-D-ribose 1-phosphate degradation; D-glyceraldehyde 3-phosphate and acetaldehyde from 2-deoxy-alpha-D-ribose 1-phosphate: step 2/2. In terms of biological role, catalyzes a reversible aldol reaction between acetaldehyde and D-glyceraldehyde 3-phosphate to generate 2-deoxy-D-ribose 5-phosphate. The sequence is that of Deoxyribose-phosphate aldolase from Pectobacterium carotovorum subsp. carotovorum (strain PC1).